A 271-amino-acid polypeptide reads, in one-letter code: tRNA (guanine-N(7)-)-methyltransferase (271 aa).

Positions 1–52 (MSDSHHTPEAASASLRHVRAKGEPRFPDGPKADPAGSHFERRIRSFQPRRSR) are disordered. Residues 20–31 (AKGEPRFPDGPK) show a composition bias toward basic and acidic residues. Residues glutamate 93, aspartate 118, aspartate 145, and aspartate 168 each coordinate S-adenosyl-L-methionine. Residue aspartate 168 is part of the active site. Substrate contacts are provided by residues lysine 172, aspartate 204, and 241–244 (TRFE).

The protein belongs to the class I-like SAM-binding methyltransferase superfamily. TrmB family.

The catalysed reaction is guanosine(46) in tRNA + S-adenosyl-L-methionine = N(7)-methylguanosine(46) in tRNA + S-adenosyl-L-homocysteine. Its pathway is tRNA modification; N(7)-methylguanine-tRNA biosynthesis. Catalyzes the formation of N(7)-methylguanine at position 46 (m7G46) in tRNA. This Streptomyces coelicolor (strain ATCC BAA-471 / A3(2) / M145) protein is tRNA (guanine-N(7)-)-methyltransferase.